Reading from the N-terminus, the 591-residue chain is V-type ATP synthase alpha chain (591 aa).

233–240 (GPFGAGKT) provides a ligand contact to ATP.

The protein belongs to the ATPase alpha/beta chains family.

The catalysed reaction is ATP + H2O + 4 H(+)(in) = ADP + phosphate + 5 H(+)(out). In terms of biological role, produces ATP from ADP in the presence of a proton gradient across the membrane. The V-type alpha chain is a catalytic subunit. The protein is V-type ATP synthase alpha chain of Streptococcus pneumoniae (strain Hungary19A-6).